The sequence spans 291 residues: Pre-mRNA-splicing factor SPP381 (291 aa).

Disordered regions lie at residues 1-99 (MSFR…PLPR) and 239-266 (EKEK…YKIT). 2 stretches are compositionally biased toward polar residues: residues 28 to 41 (QNVS…SLSH) and 52 to 62 (TGKNRTPNDGQ). Acidic residues predominate over residues 63 to 91 (ESNESDGSPESDESPESEESSDNSDSSDS). Positions 239 to 258 (EKEKLDHKKQRSAEKVEKSH) are enriched in basic and acidic residues.

The protein belongs to the SPP381 family. As to quaternary structure, component of the U4/U6-U5 tri-snRNP complex composed of the U4, U6 and U5 snRNAs and at least PRP3, PRP4, PRP6, PRP8, PRP18, PRP31, PRP38, SNU13, SNU23, SNU66, SNU114, SPP381, SMB1, SMD1, SMD2, SMD3, SMX2, SMX3, LSM2, LSM3, LSM4, LSM5, LSM6, LSM7, LSM8, BRR2 and DIB1. Interacts with PRP38.

The protein resides in the nucleus. In terms of biological role, component of the spliceosome and rRNA processing machinery. In association with the spliceosomal U4/U6.U5 tri-snRNP particle, required for splicing of pre-mRNA. The chain is Pre-mRNA-splicing factor SPP381 (SPP381) from Saccharomyces cerevisiae (strain ATCC 204508 / S288c) (Baker's yeast).